Here is a 1370-residue protein sequence, read N- to C-terminus: Insulin-like growth factor 1 receptor (1370 aa).

An N-terminal signal peptide occupies residues 1-30 (MKSGSGGGSPTSLWGLVFLSAALSLWPTSG). Cysteines 33 and 52 form a disulfide. N-linked (GlcNAc...) asparagine glycosylation is found at asparagine 51, asparagine 102, and asparagine 135. Intrachain disulfides connect cysteine 150-cysteine 178, cysteine 182-cysteine 205, cysteine 192-cysteine 211, cysteine 215-cysteine 224, cysteine 219-cysteine 230, cysteine 231-cysteine 239, cysteine 235-cysteine 248, cysteine 251-cysteine 260, cysteine 264-cysteine 276, cysteine 282-cysteine 303, cysteine 307-cysteine 321, cysteine 324-cysteine 328, and cysteine 332-cysteine 354. The N-linked (GlcNAc...) asparagine glycan is linked to asparagine 245. Asparagine 314 carries an N-linked (GlcNAc...) asparagine glycan. Asparagine 418 and asparagine 439 each carry an N-linked (GlcNAc...) asparagine glycan. Cysteine 456 and cysteine 489 form a disulfide bridge. Fibronectin type-III domains are found at residues 490 to 610 (ESDV…TNAS) and 611 to 709 (VPSI…TEAE). 9 N-linked (GlcNAc...) asparagine glycosylation sites follow: asparagine 535, asparagine 608, asparagine 623, asparagine 641, asparagine 748, asparagine 757, asparagine 765, asparagine 901, and asparagine 914. Over 742–936 (DVLQVANTTM…AKTTYENFMH (195 aa)) the chain is Extracellular. A Fibronectin type-III 3 domain is found at 835–928 (IPGPVTWEPR…DPVFFYVPAK (94 aa)). Residues 937-960 (LIIALPVAILLIVGGLVIMLYVFH) form a helical membrane-spanning segment. Residues 961 to 1370 (RKRNNSRLGN…ALPLPQSSTC (410 aa)) are Cytoplasmic-facing. The short motif at 978 to 981 (NPEY) is the IRS1- and SHC1-binding element. Position 981 is a phosphotyrosine (tyrosine 981). Positions 1000-1275 (ITMNRELGQG…SIKDEMEPSF (276 aa)) constitute a Protein kinase domain. Residues 1006–1014 (LGQGSFGMV) and lysine 1034 contribute to the ATP site. Aspartate 1136 functions as the Proton acceptor in the catalytic mechanism. 3 positions are modified to phosphotyrosine; by autocatalysis: tyrosine 1162, tyrosine 1166, and tyrosine 1167. Residues lysine 1169 and lysine 1172 each participate in a glycyl lysine isopeptide (Lys-Gly) (interchain with G-Cter in ubiquitin) cross-link. Serine 1279 carries the phosphoserine; by GSK3-beta modification. Phosphoserine is present on serine 1283. Residues 1304–1370 (NMESVPLDPS…ALPLPQSSTC (67 aa)) are disordered. Over residues 1305–1321 (MESVPLDPSASSASLPL) the composition is skewed to low complexity. Residues 1322 to 1331 (PERHSGHKAE) are compositionally biased toward basic and acidic residues.

Belongs to the protein kinase superfamily. Tyr protein kinase family. Insulin receptor subfamily. In terms of assembly, tetramer of 2 alpha and 2 beta chains linked by disulfide bonds. The alpha chains contribute to the formation of the ligand-binding domain, while the beta chain carries the kinase domain. Interacts with PIK3R1 and with the PTB/PID domains of IRS1 and SHC1 in vitro when autophosphorylated on tyrosine residues. Forms a hybrid receptor with INSR, the hybrid is a tetramer consisting of 1 alpha chain and 1 beta chain of INSR and 1 alpha chain and 1 beta chain of IGF1R. Interacts with ARRB1 and ARRB2. Interacts with GRB10. Interacts with RACK1. Interacts with SOCS1, SOCS2 and SOCS3. Interacts with 14-3-3 proteins. Interacts with NMD2. Interacts with MAP3K5. Interacts with STAT3. Found in a ternary complex with IGF1 and ITGAV:ITGB3 or ITGA6:ITGB4. Interacts (nascent precursor form) with ZFAND2B. Post-translationally, autophosphorylated on tyrosine residues in response to ligand binding. Autophosphorylation occurs in trans, i.e. one subunit of the dimeric receptor phosphorylates tyrosine residues on the other subunit. Autophosphorylation occurs in a sequential manner; Tyr-1166 is predominantly phosphorylated first, followed by phosphorylation of Tyr-1162 and Tyr-1167. While every single phosphorylation increases kinase activity, all three tyrosine residues in the kinase activation loop (Tyr-1162, Tyr-1166 and Tyr-1167) have to be phosphorylated for optimal activity. Can be autophosphorylated at additional tyrosine residues (in vitro). Autophosphorylated is followed by phosphorylation of juxtamembrane tyrosines and C-terminal serines. May also be phosphorylated at Tyr-1162 and Tyr-1167 by mTORC2. Phosphorylation of Tyr-981 is required for IRS1- and SHC1-binding. Phosphorylation of Ser-1279 by GSK-3beta restrains kinase activity and promotes cell surface expression, it requires a priming phosphorylation at Ser-1283. Dephosphorylated by PTPN1. Polyubiquitinated at Lys-1169 and Lys-1172 through both 'Lys-48' and 'Lys-29' linkages, promoting receptor endocytosis and subsequent degradation by the proteasome. Ubiquitination is facilitated by pre-existing phosphorylation. In terms of processing, sumoylated with SUMO1. Post-translationally, controlled by regulated intramembrane proteolysis (RIP). Undergoes metalloprotease-dependent constitutive ectodomain shedding to produce a membrane-anchored 52 kDa C-Terminal fragment which is further processed by presenilin gamma-secretase to yield an intracellular 50 kDa fragment.

It localises to the cell membrane. The catalysed reaction is L-tyrosyl-[protein] + ATP = O-phospho-L-tyrosyl-[protein] + ADP + H(+). Activated by autophosphorylation at Tyr-1162, Tyr-1166 and Tyr-1167 on the kinase activation loop; phosphorylation at all three tyrosine residues is required for optimal kinase activity. Inhibited by MSC1609119A-1, BMS-754807, PQIP, benzimidazole pyridinone, isoquinolinedione, bis-azaindole, 3-cyanoquinoline, 2,4-bis-arylamino-1,3-pyrimidine, pyrrolopyrimidine, pyrrole-5-carboxaldehyde, picropodophyllin (PPP), tyrphostin derivatives. While most inhibitors bind to the ATP binding pocket, MSC1609119A-1 functions as allosteric inhibitor and binds close to the DFG motif and the activation loop. Dephosphorylated by PTPN1. In terms of biological role, receptor tyrosine kinase which mediates actions of insulin-like growth factor 1 (IGF1). Binds IGF1 with high affinity and IGF2 and insulin (INS) with a lower affinity. The activated IGF1R is involved in cell growth and survival control. IGF1R is crucial for tumor transformation and survival of malignant cell. Ligand binding activates the receptor kinase, leading to receptor autophosphorylation, and tyrosines phosphorylation of multiple substrates, that function as signaling adapter proteins including, the insulin-receptor substrates (IRS1/2), Shc and 14-3-3 proteins. Phosphorylation of IRSs proteins lead to the activation of two main signaling pathways: the PI3K-AKT/PKB pathway and the Ras-MAPK pathway. The result of activating the MAPK pathway is increased cellular proliferation, whereas activating the PI3K pathway inhibits apoptosis and stimulates protein synthesis. Phosphorylated IRS1 can activate the 85 kDa regulatory subunit of PI3K (PIK3R1), leading to activation of several downstream substrates, including protein AKT/PKB. AKT phosphorylation, in turn, enhances protein synthesis through mTOR activation and triggers the antiapoptotic effects of IGFIR through phosphorylation and inactivation of BAD. In parallel to PI3K-driven signaling, recruitment of Grb2/SOS by phosphorylated IRS1 or Shc leads to recruitment of Ras and activation of the ras-MAPK pathway. In addition to these two main signaling pathways IGF1R signals also through the Janus kinase/signal transducer and activator of transcription pathway (JAK/STAT). Phosphorylation of JAK proteins can lead to phosphorylation/activation of signal transducers and activators of transcription (STAT) proteins. In particular activation of STAT3, may be essential for the transforming activity of IGF1R. The JAK/STAT pathway activates gene transcription and may be responsible for the transforming activity. JNK kinases can also be activated by the IGF1R. IGF1 exerts inhibiting activities on JNK activation via phosphorylation and inhibition of MAP3K5/ASK1, which is able to directly associate with the IGF1R. When present in a hybrid receptor with INSR, binds IGF1. This chain is Insulin-like growth factor 1 receptor (Igf1r), found in Rattus norvegicus (Rat).